The sequence spans 158 residues: Ribosome maturation factor RimP (158 aa).

This sequence belongs to the RimP family.

It is found in the cytoplasm. Its function is as follows. Required for maturation of 30S ribosomal subunits. The sequence is that of Ribosome maturation factor RimP from Lactobacillus gasseri (strain ATCC 33323 / DSM 20243 / BCRC 14619 / CIP 102991 / JCM 1131 / KCTC 3163 / NCIMB 11718 / NCTC 13722 / AM63).